Consider the following 546-residue polypeptide: Pyridine nucleotide-disulfide oxidoreductase domain-containing protein 1 (546 aa).

The protein belongs to the class-I pyridine nucleotide-disulfide oxidoreductase family. PYROXD1 subfamily. The cofactor is FAD.

The protein is Pyridine nucleotide-disulfide oxidoreductase domain-containing protein 1 (pyroxd1) of Dictyostelium discoideum (Social amoeba).